Here is a 118-residue protein sequence, read N- to C-terminus: Large ribosomal subunit protein bL19 (118 aa).

This sequence belongs to the bacterial ribosomal protein bL19 family.

This protein is located at the 30S-50S ribosomal subunit interface and may play a role in the structure and function of the aminoacyl-tRNA binding site. The sequence is that of Large ribosomal subunit protein bL19 from Buchnera aphidicola subsp. Baizongia pistaciae (strain Bp).